Reading from the N-terminus, the 543-residue chain is Protein MGF 505-10R (543 aa).

This sequence belongs to the asfivirus MGF 505 family.

In terms of biological role, plays a role in virus cell tropism, and may be required for efficient virus replication in macrophages. In African swine fever virus (isolate Tick/South Africa/Pretoriuskop Pr4/1996) (ASFV), this protein is Protein MGF 505-10R.